The sequence spans 169 residues: Sorting nexin-24 (169 aa).

Position 1 is an N-acetylmethionine (M1). The PX domain occupies 1–125 (MEVYIPSFRH…SFDETESEES (125 aa)). R38, S40, K61, and R74 together coordinate a 1,2-diacyl-sn-glycero-3-phospho-(1D-myo-inositol-3-phosphate). A phosphoserine mark is found at S113 and S116.

The protein belongs to the sorting nexin family.

It localises to the cytoplasmic vesicle membrane. Its function is as follows. May be involved in several stages of intracellular trafficking. The protein is Sorting nexin-24 (Snx24) of Rattus norvegicus (Rat).